The primary structure comprises 287 residues: uncharacterized protein (287 aa).

In terms of domain architecture, ATP-grasp spans 115–287 (SLLSKETIKS…KKFLKKKLIS (173 aa)).

This is an uncharacterized protein from Mycoplasma genitalium (strain ATCC 33530 / DSM 19775 / NCTC 10195 / G37) (Mycoplasmoides genitalium).